Consider the following 465-residue polypeptide: ATP synthase subunit beta (465 aa).

148–155 (GGAGVGKT) serves as a coordination point for ATP.

Belongs to the ATPase alpha/beta chains family. In terms of assembly, F-type ATPases have 2 components, CF(1) - the catalytic core - and CF(0) - the membrane proton channel. CF(1) has five subunits: alpha(3), beta(3), gamma(1), delta(1), epsilon(1). CF(0) has three main subunits: a(1), b(2) and c(9-12). The alpha and beta chains form an alternating ring which encloses part of the gamma chain. CF(1) is attached to CF(0) by a central stalk formed by the gamma and epsilon chains, while a peripheral stalk is formed by the delta and b chains.

Its subcellular location is the cell inner membrane. The catalysed reaction is ATP + H2O + 4 H(+)(in) = ADP + phosphate + 5 H(+)(out). Produces ATP from ADP in the presence of a proton gradient across the membrane. The catalytic sites are hosted primarily by the beta subunits. The chain is ATP synthase subunit beta from Chromobacterium violaceum (strain ATCC 12472 / DSM 30191 / JCM 1249 / CCUG 213 / NBRC 12614 / NCIMB 9131 / NCTC 9757 / MK).